Here is a 371-residue protein sequence, read N- to C-terminus: Flagellar P-ring protein (371 aa).

Positions 1 to 24 (MSIRVLLFSIFTGFLLAAAGPALA) are cleaved as a signal peptide. The segment covering 301–321 (PQPFSSGTTATQPQTDISAQK) has biased composition (polar residues). Residues 301–322 (PQPFSSGTTATQPQTDISAQKT) are disordered.

The protein belongs to the FlgI family. The basal body constitutes a major portion of the flagellar organelle and consists of four rings (L,P,S, and M) mounted on a central rod.

It is found in the periplasm. It localises to the bacterial flagellum basal body. Functionally, assembles around the rod to form the L-ring and probably protects the motor/basal body from shearing forces during rotation. In Allorhizobium ampelinum (strain ATCC BAA-846 / DSM 112012 / S4) (Agrobacterium vitis (strain S4)), this protein is Flagellar P-ring protein.